Consider the following 368-residue polypeptide: Cobalt-precorrin-5B C(1)-methyltransferase (368 aa).

This sequence belongs to the CbiD family.

The enzyme catalyses Co-precorrin-5B + S-adenosyl-L-methionine = Co-precorrin-6A + S-adenosyl-L-homocysteine. It functions in the pathway cofactor biosynthesis; adenosylcobalamin biosynthesis; cob(II)yrinate a,c-diamide from sirohydrochlorin (anaerobic route): step 6/10. Functionally, catalyzes the methylation of C-1 in cobalt-precorrin-5B to form cobalt-precorrin-6A. The polypeptide is Cobalt-precorrin-5B C(1)-methyltransferase (Synechococcus sp. (strain CC9605)).